Here is a 209-residue protein sequence, read N- to C-terminus: Thymidine kinase (209 aa).

ATP contacts are provided by residues 9–16 and 88–91; these read SAMNAGKT and DEAQ. Residue Glu-89 is the Proton acceptor of the active site.

The protein belongs to the thymidine kinase family. As to quaternary structure, homotetramer.

The protein resides in the cytoplasm. The enzyme catalyses thymidine + ATP = dTMP + ADP + H(+). In Xanthomonas axonopodis pv. citri (strain 306), this protein is Thymidine kinase.